Consider the following 159-residue polypeptide: Endoribonuclease YbeY (159 aa).

Zn(2+)-binding residues include His117, His121, and His127.

Belongs to the endoribonuclease YbeY family. Zn(2+) is required as a cofactor.

It is found in the cytoplasm. Single strand-specific metallo-endoribonuclease involved in late-stage 70S ribosome quality control and in maturation of the 3' terminus of the 16S rRNA. The polypeptide is Endoribonuclease YbeY (Azorhizobium caulinodans (strain ATCC 43989 / DSM 5975 / JCM 20966 / LMG 6465 / NBRC 14845 / NCIMB 13405 / ORS 571)).